The primary structure comprises 261 residues: Phosphatidylglycerol--prolipoprotein diacylglyceryl transferase (261 aa).

A run of 4 helical transmembrane segments spans residues 17-37, 59-79, 94-114, and 121-141; these read FAIH…LLLG, LLFA…TLFY, IWEG…ALLW, and TSFF…LAFG. Arg-142 contributes to the a 1,2-diacyl-sn-glycero-3-phospho-(1'-sn-glycerol) binding site. Helical transmembrane passes span 174–194 and 228–248; these read PSQI…LWIY and FLGL…PMII.

The protein belongs to the Lgt family.

It is found in the cell inner membrane. The enzyme catalyses L-cysteinyl-[prolipoprotein] + a 1,2-diacyl-sn-glycero-3-phospho-(1'-sn-glycerol) = an S-1,2-diacyl-sn-glyceryl-L-cysteinyl-[prolipoprotein] + sn-glycerol 1-phosphate + H(+). It participates in protein modification; lipoprotein biosynthesis (diacylglyceryl transfer). Functionally, catalyzes the transfer of the diacylglyceryl group from phosphatidylglycerol to the sulfhydryl group of the N-terminal cysteine of a prolipoprotein, the first step in the formation of mature lipoproteins. This chain is Phosphatidylglycerol--prolipoprotein diacylglyceryl transferase, found in Polynucleobacter asymbioticus (strain DSM 18221 / CIP 109841 / QLW-P1DMWA-1) (Polynucleobacter necessarius subsp. asymbioticus).